Reading from the N-terminus, the 319-residue chain is Acetyl-coenzyme A carboxylase carboxyl transferase subunit alpha (319 aa).

One can recognise a CoA carboxyltransferase C-terminal domain in the interval 39–293 (RLQKKSNDLT…KAVLEKQLHE (255 aa)).

The protein belongs to the AccA family. As to quaternary structure, acetyl-CoA carboxylase is a heterohexamer composed of biotin carboxyl carrier protein (AccB), biotin carboxylase (AccC) and two subunits each of ACCase subunit alpha (AccA) and ACCase subunit beta (AccD).

It localises to the cytoplasm. It carries out the reaction N(6)-carboxybiotinyl-L-lysyl-[protein] + acetyl-CoA = N(6)-biotinyl-L-lysyl-[protein] + malonyl-CoA. It participates in lipid metabolism; malonyl-CoA biosynthesis; malonyl-CoA from acetyl-CoA: step 1/1. Its function is as follows. Component of the acetyl coenzyme A carboxylase (ACC) complex. First, biotin carboxylase catalyzes the carboxylation of biotin on its carrier protein (BCCP) and then the CO(2) group is transferred by the carboxyltransferase to acetyl-CoA to form malonyl-CoA. The protein is Acetyl-coenzyme A carboxylase carboxyl transferase subunit alpha of Neisseria meningitidis serogroup C / serotype 2a (strain ATCC 700532 / DSM 15464 / FAM18).